The primary structure comprises 639 residues: Chaperone protein DnaK (639 aa).

Threonine 197 carries the post-translational modification Phosphothreonine; by autocatalysis. 2 stretches are compositionally biased toward basic and acidic residues: residues 514–529 (AEENAEADKDRKDLVE) and 540–553 (GTEKSLEEHGEKVD). Disordered stretches follow at residues 514-554 (AEEN…KVDP) and 603-639 (DKAEAAQDGAPEEEERGVDEDIVDADFEDLDDDRKRG). Residues 612-633 (APEEEERGVDEDIVDADFEDLD) show a composition bias toward acidic residues.

The protein belongs to the heat shock protein 70 family.

In terms of biological role, acts as a chaperone. The chain is Chaperone protein DnaK from Jannaschia sp. (strain CCS1).